A 141-amino-acid chain; its full sequence is Putative nickel-responsive regulator (141 aa).

4 residues coordinate Ni(2+): His-80, His-91, His-93, and Cys-99.

Belongs to the transcriptional regulatory CopG/NikR family. Requires Ni(2+) as cofactor.

Transcriptional regulator. This Methanococcus vannielii (strain ATCC 35089 / DSM 1224 / JCM 13029 / OCM 148 / SB) protein is Putative nickel-responsive regulator.